The chain runs to 99 residues: Prostate and testis expressed protein 14 (99 aa).

Residues 1–21 (MEKYLLLLLLGIFLRVGFLQA) form the signal peptide. The UPAR/Ly6 domain maps to 22–99 (LTCVSCGRLN…CDHQNLCNKP (78 aa)). 5 disulfides stabilise this stretch: C24/C51, C27/C36, C43/C69, C73/C89, and C90/C96. N31 is a glycosylation site (N-linked (GlcNAc...) asparagine). N-linked (GlcNAc...) asparagine glycosylation is present at N75.

It belongs to the PATE family. Monomer. Glycosylated. In terms of tissue distribution, predominantly expressed in the seminal vesicles. Expressed in prostate, and to a lesser extent in the cauda epididymis.

It is found in the secreted. This Mus musculus (Mouse) protein is Prostate and testis expressed protein 14.